Here is a 504-residue protein sequence, read N- to C-terminus: Putative lipase ATG15 (504 aa).

A topological domain (cytoplasmic) is located at residue Met1. A helical; Signal-anchor for type II membrane protein transmembrane segment spans residues 2 to 22 (LGRQVTMLLKVIVAVAVLFVW). Topologically, residues 23–504 (HRSRDSSRGD…WLGICTDYGV (482 aa)) are lumenal. Asn183 carries an N-linked (GlcNAc...) asparagine glycan. The active-site Charge relay system is the Ser313. The interval 458 to 484 (EESSSSIASSSQLTSSHSESETLTSTD) is disordered. Low complexity predominate over residues 461 to 483 (SSSIASSSQLTSSHSESETLTST).

The protein belongs to the AB hydrolase superfamily. Lipase family. In terms of assembly, binds to both phosphatidylinositol (PI) and phosphatidylinositol 3,5-bisphosphate (PIP2).

The protein localises to the endosome. It is found in the multivesicular body membrane. It localises to the prevacuolar compartment membrane. The enzyme catalyses a triacylglycerol + H2O = a diacylglycerol + a fatty acid + H(+). Lipase which is essential for lysis of subvacuolar cytoplasm to vacuole targeted bodies and intravacuolar autophagic bodies. Involved in the lysis of intravacuolar multivesicular body (MVB) vesicles. The intravacuolar membrane disintegration by ATG15 is critical to life span extension. The protein is Putative lipase ATG15 (ATG15) of Candida glabrata (strain ATCC 2001 / BCRC 20586 / JCM 3761 / NBRC 0622 / NRRL Y-65 / CBS 138) (Yeast).